Here is a 216-residue protein sequence, read N- to C-terminus: Ribosomal RNA large subunit methyltransferase E (216 aa).

S-adenosyl-L-methionine is bound by residues Gly-60, Trp-62, Asp-80, Asp-96, and Asp-121. The active-site Proton acceptor is the Lys-161.

The protein belongs to the class I-like SAM-binding methyltransferase superfamily. RNA methyltransferase RlmE family.

It localises to the cytoplasm. The catalysed reaction is uridine(2552) in 23S rRNA + S-adenosyl-L-methionine = 2'-O-methyluridine(2552) in 23S rRNA + S-adenosyl-L-homocysteine + H(+). Functionally, specifically methylates the uridine in position 2552 of 23S rRNA at the 2'-O position of the ribose in the fully assembled 50S ribosomal subunit. This Pseudomonas savastanoi pv. phaseolicola (strain 1448A / Race 6) (Pseudomonas syringae pv. phaseolicola (strain 1448A / Race 6)) protein is Ribosomal RNA large subunit methyltransferase E.